Reading from the N-terminus, the 183-residue chain is Transmembrane protein 154 (183 aa).

Residues 1–22 form the signal peptide; sequence MQAPRAALVFALVIALVPVGRG. At 23-75 the chain is on the extracellular side; that stretch reads NYEELENSGDTTVESERPNKVTIPSTFAAVTIKETLNANINSTNFAPDENQLE. Residues 76 to 96 traverse the membrane as a helical segment; that stretch reads FILMVLIPLILLVLLLLSVVF. The Cytoplasmic segment spans residues 97–183; sequence LATYYKRKRT…SNHNPSDSES (87 aa). The interval 163-183 is disordered; that stretch reads ECLPTLKEEKESNHNPSDSES. A Phosphoserine modification is found at serine 179.

The protein localises to the membrane. This chain is Transmembrane protein 154 (TMEM154), found in Homo sapiens (Human).